The following is a 240-amino-acid chain: Uridylate kinase (240 aa).

12-15 lines the ATP pocket; that stretch reads KLSG. An involved in allosteric activation by GTP region spans residues 20 to 25; sequence GDKGFG. Gly-54 is a UMP binding site. ATP is bound by residues Gly-55 and Arg-59. Residues Asp-74 and 135–142 each bind UMP; that span reads TGSPYFST. Positions 163, 169, and 172 each coordinate ATP.

It belongs to the UMP kinase family. As to quaternary structure, homohexamer.

Its subcellular location is the cytoplasm. The enzyme catalyses UMP + ATP = UDP + ADP. It participates in pyrimidine metabolism; CTP biosynthesis via de novo pathway; UDP from UMP (UMPK route): step 1/1. Its activity is regulated as follows. Allosterically activated by GTP. Inhibited by UTP. In terms of biological role, catalyzes the reversible phosphorylation of UMP to UDP. The polypeptide is Uridylate kinase (Limosilactobacillus reuteri (strain DSM 20016) (Lactobacillus reuteri)).